The chain runs to 37 residues: Large ribosomal subunit protein bL36 (37 aa).

Belongs to the bacterial ribosomal protein bL36 family.

This chain is Large ribosomal subunit protein bL36, found in Sulfurihydrogenibium sp. (strain YO3AOP1).